The sequence spans 316 residues: MARYTNSLKIFTGNSNPKLASEIAEHLGLKLADSEVGTFSDGEISVRIGESVRGASVFVIQSTCAPVNNNLMELLIMIDAFKRASAAEINAVIPYYGYARQDRKAKARDPITAKLVADLITAAGAHRVVTMDLHAPQIQGYFNIPVDHLLGGPILAKYFMDKELGDDVVVVSPDHGSVTRARYFAEKLNAPLAIIDKRRPKANVAEVMNIIGDVKGKKAILVDDLIDTAGTLVQAAEALLDHGAVEIYACATHGVLSGPAIERLKESPIKEVVITDTIPLPEEKKIDKIKVRSVAPLFAEAILRIHEGMSVSKLFT.

ATP is bound by residues 41 to 43 and 100 to 101; these read DGE and RQ. Histidine 134 and aspartate 174 together coordinate Mg(2+). Lysine 197 is an active-site residue. D-ribose 5-phosphate-binding positions include arginine 199, aspartate 223, and 227–231; that span reads DTAGT.

The protein belongs to the ribose-phosphate pyrophosphokinase family. Class I subfamily. Homohexamer. The cofactor is Mg(2+).

The protein localises to the cytoplasm. The enzyme catalyses D-ribose 5-phosphate + ATP = 5-phospho-alpha-D-ribose 1-diphosphate + AMP + H(+). The protein operates within metabolic intermediate biosynthesis; 5-phospho-alpha-D-ribose 1-diphosphate biosynthesis; 5-phospho-alpha-D-ribose 1-diphosphate from D-ribose 5-phosphate (route I): step 1/1. Functionally, involved in the biosynthesis of the central metabolite phospho-alpha-D-ribosyl-1-pyrophosphate (PRPP) via the transfer of pyrophosphoryl group from ATP to 1-hydroxyl of ribose-5-phosphate (Rib-5-P). The polypeptide is Ribose-phosphate pyrophosphokinase (Caldanaerobacter subterraneus subsp. tengcongensis (strain DSM 15242 / JCM 11007 / NBRC 100824 / MB4) (Thermoanaerobacter tengcongensis)).